The chain runs to 148 residues: 3-hydroxyacyl-[acyl-carrier-protein] dehydratase FabZ (148 aa).

His-48 is a catalytic residue.

It belongs to the thioester dehydratase family. FabZ subfamily.

Its subcellular location is the cytoplasm. It carries out the reaction a (3R)-hydroxyacyl-[ACP] = a (2E)-enoyl-[ACP] + H2O. In terms of biological role, involved in unsaturated fatty acids biosynthesis. Catalyzes the dehydration of short chain beta-hydroxyacyl-ACPs and long chain saturated and unsaturated beta-hydroxyacyl-ACPs. The polypeptide is 3-hydroxyacyl-[acyl-carrier-protein] dehydratase FabZ (Campylobacter concisus (strain 13826)).